Consider the following 622-residue polypeptide: Glucose 1,6-bisphosphate synthase (622 aa).

Residues Arg-73 and Ser-175 each contribute to the alpha-D-glucose 1,6-bisphosphate site. The active-site Phosphoserine intermediate is Ser-175. Ser-175, Asp-332, and Asp-334 together coordinate Mg(2+). A Phosphoserine modification is found at Ser-175. Asp-336, Arg-337, Glu-434, Ser-436, and Lys-448 together coordinate alpha-D-glucose 1,6-bisphosphate.

The protein belongs to the phosphohexose mutase family.

Its subcellular location is the cytoplasm. It is found in the cytosol. It carries out the reaction (2R)-3-phospho-glyceroyl phosphate + alpha-D-glucose 1-phosphate = alpha-D-glucose 1,6-bisphosphate + (2R)-3-phosphoglycerate + H(+). It catalyses the reaction alpha-D-glucose 6-phosphate + (2R)-3-phospho-glyceroyl phosphate = alpha-D-glucose 1,6-bisphosphate + (2R)-3-phosphoglycerate + H(+). The enzyme catalyses (2R)-3-phospho-glyceroyl phosphate + alpha-D-ribose 1-phosphate = alpha-D-ribose 1,5-bisphosphate + (2R)-3-phosphoglycerate + H(+). The catalysed reaction is 2-deoxy-alpha-D-ribose 1-phosphate + (2R)-3-phospho-glyceroyl phosphate = 2-deoxy-alpha-D-ribose 1,5-bisphosphate + (2R)-3-phosphoglycerate + H(+). It carries out the reaction (2R)-3-phospho-glyceroyl phosphate + alpha-D-mannose 1-phosphate = alpha-D-mannose 1,6-bisphosphate + (2R)-3-phosphoglycerate + H(+). Functionally, glucose 1,6-bisphosphate synthase using 1,3-bisphosphoglycerate as a phosphate donor and a series of 1-phosphate sugars, including glucose 1-phosphate, mannose 1-phosphate, ribose 1-phosphate and deoxyribose 1-phosphate, as acceptors. In vitro, also exhibits very low phosphopentomutase and phosphoglucomutase activity which are most probably not physiologically relevant. The protein is Glucose 1,6-bisphosphate synthase of Homo sapiens (Human).